The chain runs to 315 residues: Ribosomal RNA small subunit methyltransferase H (315 aa).

Residues Gly-33 to His-35, Asp-52, Phe-84, Asp-106, and Gln-113 contribute to the S-adenosyl-L-methionine site. The segment at Pro-290–Leu-315 is disordered. Residues Thr-292–Ser-304 show a composition bias toward polar residues.

It belongs to the methyltransferase superfamily. RsmH family.

It localises to the cytoplasm. It catalyses the reaction cytidine(1402) in 16S rRNA + S-adenosyl-L-methionine = N(4)-methylcytidine(1402) in 16S rRNA + S-adenosyl-L-homocysteine + H(+). In terms of biological role, specifically methylates the N4 position of cytidine in position 1402 (C1402) of 16S rRNA. The sequence is that of Ribosomal RNA small subunit methyltransferase H from Lactobacillus helveticus (strain DPC 4571).